We begin with the raw amino-acid sequence, 327 residues long: MAWWKSWIEQEGVTVKSSSHFNPDPDAETLYKAMKGIGTNEQAIIDVLTKRSNTQRQQIAKSFKAQFGKDLTETLKSELSGKFERLIVALMYPPYRYEAKELHDAMKGLGTKEGVIIEILASRTKNQLREIMKAYEEDYGSSLEEDIQADTSGYLERILVCLLQGSRDDVSSFVDPGLALQDAQDLYAAGEKIRGTDEMKFITILCTRSATHLLRVFEEYEKIANKSIEDSIKSETHGSLEEAMLTVVKCTQNLHSYFAERLYYAMKGAGTRDGTLIRNIVSRSEIDLNLIKCHFKKMYGKTLSSMIMEDTSGDYKNALLSLVGSDP.

4 Annexin repeats span residues 21-92 (FNPD…ALMY), 93-164 (PPYR…CLLQ), 177-249 (GLAL…TVVK), and 253-324 (NLHS…SLVG). Ca(2+) is bound by residues Met266, Gly268, Gly270, and Asp310.

Belongs to the annexin family.

This protein is an anticoagulant protein that acts as an indirect inhibitor of the thromboplastin-specific complex, which is involved in the blood coagulation cascade. The polypeptide is Annexin A8 (Homo sapiens (Human)).